The following is a 347-amino-acid chain: ATP-dependent kinase YFH7 (347 aa).

33–41 (GPPGSGKST) contributes to the ATP binding site.

This sequence belongs to the YFH7 family.

In terms of biological role, ATP-dependent kinase that could be involved in endoplasmic reticulum membrane assembly. The chain is ATP-dependent kinase YFH7 (YFH7) from Lachancea thermotolerans (strain ATCC 56472 / CBS 6340 / NRRL Y-8284) (Yeast).